Here is a 335-residue protein sequence, read N- to C-terminus: Thioredoxin reductase (335 aa).

FAD contacts are provided by residues 22–25, 44–51, asparagine 60, and valine 93; these read SGPA and EGTSFGGA. Cysteine 145 and cysteine 148 are disulfide-bonded. Positions 166, 185, 191, 248, and 268 each coordinate NADP(+). Residues aspartate 288 and 295–298 contribute to the FAD site; that span reads RQAV. Arginine 295 contacts NADP(+).

Belongs to the class-II pyridine nucleotide-disulfide oxidoreductase family. Homodimer. Requires FAD as cofactor.

It is found in the cytoplasm. It catalyses the reaction [thioredoxin]-dithiol + NADP(+) = [thioredoxin]-disulfide + NADPH + H(+). This chain is Thioredoxin reductase, found in Mycobacterium tuberculosis (strain CDC 1551 / Oshkosh).